Reading from the N-terminus, the 3036-residue chain is DmX-like protein 2 (3036 aa).

WD repeat units follow at residues 108 to 145, 167 to 207, and 230 to 278; these read FLSS…ILEE, KTSV…KSSI, and AHPR…EDCL. At S326 the chain carries Phosphoserine. Residues 417–480 form a disordered region; sequence KQVDHENDDA…EGSPRTYSRL (64 aa). The segment covering 422–434 has biased composition (acidic residues); that stretch reads ENDDADREDEEHS. A compositionally biased stretch (basic and acidic residues) spans 435–473; it reads QEDRERGLHMKLDHDLSLDRESEAGTGSSEHEDGEREGS. S473 is subject to Phosphoserine. One copy of the WD 4 repeat lies at 492 to 532; it reads DRKIETLLTEWNKNPDMLFTIHPVDGTFLVWHVKYLDEYNP. S588 carries the phosphoserine modification. 3 WD repeats span residues 595–634, 751–803, and 878–920; these read HSRS…KSAF, LHTS…RKLL, and QPSQ…VQAC. The tract at residues 932-959 is disordered; that stretch reads SLLSVPGQKNVDSSPETSPSVSPMPHSS. Phosphoserine is present on residues S944 and S945. The segment covering 949–959 has biased composition (low complexity); it reads SPSVSPMPHSS. The stretch at 1000–1037 is one WD 8 repeat; it reads LSSSSIYPVCLAPYLVVTTCSDNKVRFWKCCMEANPEC. S1140, S1143, and S1151 each carry phosphoserine. 2 WD repeats span residues 1163-1204 and 1244-1281; these read PNIK…VTEQ and GTPS…VKFG. S1287 and S1400 each carry phosphoserine. At T1417 the chain carries Phosphothreonine. S1857 carries the post-translational modification Phosphoserine. Residues 1927–1936 show a composition bias toward basic and acidic residues; it reads ISHRMDDVPS. Residues 1927–1952 are disordered; it reads ISHRMDDVPSHSKALSDGNGSSGIEW. S1984 carries the phosphoserine modification. Residues 1999-2033 are disordered; that stretch reads KSTDAREKDKQSDQKASDPNMLLTPQEEDDPEGDT. A compositionally biased stretch (basic and acidic residues) spans 2001 to 2014; that stretch reads TDAREKDKQSDQKA. Position 2022 is a phosphothreonine (T2022). The span at 2024–2033 shows a compositional bias: acidic residues; sequence QEEDDPEGDT. Positions 2122–2153 form a coiled coil; the sequence is GSYERHQIERRRLQAKREHAERRKSWLQKNQD. S2399 and S2640 each carry phosphoserine. WD repeat units follow at residues 2761-2800, 2804-2843, 2850-2892, 2898-2937, 2940-2979, and 2992-3030; these read RNLH…QLVC, AGNA…SNPK, CHSK…GNSL, CHDH…LIHT, AHDS…LIHS, and NIGA…NIPN.

In terms of assembly, interacts with MADD and RAB3GAP.

The protein resides in the cytoplasmic vesicle. It localises to the secretory vesicle. It is found in the synaptic vesicle membrane. The protein localises to the neuronal dense core vesicle. In terms of biological role, may serve as a scaffold protein for MADD and RAB3GA on synaptic vesicles. Plays a role in the brain as a key controller of neuronal and endocrine homeostatic processes. This chain is DmX-like protein 2 (DMXL2), found in Homo sapiens (Human).